We begin with the raw amino-acid sequence, 218 residues long: uncharacterized protein (218 aa).

A compositionally biased stretch (basic and acidic residues) spans 184-202; the sequence is MDREEKRKEKEEKRKRELA. A disordered region spans residues 184 to 218; it reads MDREEKRKEKEEKRKRELAARQLKRQEKKKQKTSK. The span at 205–218 shows a compositional bias: basic residues; the sequence is QLKRQEKKKQKTSK.

This is an uncharacterized protein from Mycoplasma pneumoniae (strain ATCC 29342 / M129 / Subtype 1) (Mycoplasmoides pneumoniae).